A 601-amino-acid polypeptide reads, in one-letter code: Deuterosome assembly protein 1 (601 aa).

Coiled coils occupy residues 14 to 59 (CEAE…NAQT), 86 to 196 (TQNY…GKKQ), and 226 to 277 (IEKL…ELQS). Residues 305-329 (AQDNRKRVESSYSPSPKEAERKRKE) form a disordered region. Residues 354–397 (EEGLCSEQERLRSEISELTQELHQKEVTIATVMKKAALLERQLK) adopt a coiled-coil conformation. The residue at position 544 (Ser-544) is a Phosphoserine. Positions 555-586 (AAQHFLMEEERRAKELEKLLNTHIDELQRHTE) form a coiled coil.

It belongs to the CEP63 family. As to quaternary structure, interacts with CEP152; the interaction is mutually exclusive with CEP63. In terms of tissue distribution, highly enriched in multicilia-abundant tissues (trachea and oviduct).

The protein localises to the cytoplasm. Key structural component of the deuterosome, a structure that promotes de novo centriole amplification in multiciliated cells. Deuterosome-mediated centriole amplification occurs in terminally differentiated multiciliated cells and can generate more than 100 centrioles. Probably sufficient for the specification and formation of the deuterosome inner core. Interacts with CEP152 and recruits PLK4 to activate centriole biogenesis. In Mus musculus (Mouse), this protein is Deuterosome assembly protein 1.